The following is a 98-amino-acid chain: ESAT-6-like protein EsxM (98 aa).

The protein belongs to the WXG100 family. CFP-10 subfamily.

It localises to the secreted. This is ESAT-6-like protein EsxM (esxM) from Mycobacterium bovis (strain ATCC BAA-935 / AF2122/97).